Consider the following 486-residue polypeptide: Argininosuccinate lyase (486 aa).

The protein belongs to the lyase 1 family. Argininosuccinate lyase subfamily.

The protein localises to the cytoplasm. It catalyses the reaction 2-(N(omega)-L-arginino)succinate = fumarate + L-arginine. The protein operates within amino-acid biosynthesis; L-arginine biosynthesis; L-arginine from L-ornithine and carbamoyl phosphate: step 3/3. The sequence is that of Argininosuccinate lyase from Acidobacterium capsulatum (strain ATCC 51196 / DSM 11244 / BCRC 80197 / JCM 7670 / NBRC 15755 / NCIMB 13165 / 161).